We begin with the raw amino-acid sequence, 534 residues long: Importin subunit alpha-1b (534 aa).

The IBB domain maps to 1–58; sequence MSLRPSERAEVRRSRYKVAVDADEGRRRREDNMVEIRKSRREESLLKKRRDGLPAAAA. ARM repeat units follow at residues 111-151, 154-193, 196-236, 238-277, 280-319, 322-362, 365-404, and 408-447; these read SPPI…NIAS, SDNTKVVVESGAVPIFVKLLSSPSEDVREQAVWALGNVAG, PKCR…NFCR, KPQPNFEQVKPALSALQRLIHSQDEEVLTDACWALSYLSD, NDKIQAVIESGVFPRLVELLMHPSASVLIPALRTVGNIVT, DMQT…NITA, REQIQAVINANIIAPLVHLLQTAEFDIKKEAAWAISNATS, and HDQIKYLVAQGCIKPLCDLLVCPDPRIVTVCLEGLENILK. The tract at residues 505–534 is disordered; it reads DAMPSGDNAQNGFNFGNQQPNVPSGGFNFG. Residues 514-523 are compositionally biased toward low complexity; it reads QNGFNFGNQQ.

This sequence belongs to the importin alpha family. As to quaternary structure, forms a complex with importin subunit beta-1. The whole complex, most stable and composed of importin alpha and importin beta, is referred to as PTAC or pore targeting complex. In terms of tissue distribution, highly expressed in root and weakly in callus, etiolated leaf and green leaf.

It localises to the cytoplasm. It is found in the perinuclear region. Functions in nuclear protein import. Binds specifically and directly to substrates containing either a simple or bipartite NLS motif. Promotes docking of import substrates to the nuclear envelope. In conjunction with importin beta-1, mediates the nuclear envelope docking, and the subsequent translocation into the nucleus of the constitutive morphogenetic 1 (COP1) protein containing bipartite NLS motif. This is Importin subunit alpha-1b from Oryza sativa subsp. japonica (Rice).